We begin with the raw amino-acid sequence, 173 residues long: MIIYKDILTGDEIISDAFNLKEVDNILWEVDCRNITIGDENIQLEGANPSAEGEDDDAGGAGNAEQVLDIKHNFRLNDYPKLEKDEYKKAIKGYMKKVLAKLEEKKAPEETIKEFKENAQTALKRILANYKDYDVLVGESFGADAMHILINYREDGVTPYATFWKHGLEEYKV.

Residues 1–173 (MIIYKDILTG…WKHGLEEYKV (173 aa)) form the TCTP domain.

Belongs to the TCTP family.

Its subcellular location is the cytoplasm. The protein localises to the cytoskeleton. In terms of biological role, involved in protein synthesis. Involved in microtubule stabilization. The sequence is that of Translationally-controlled tumor protein homolog from Aspergillus oryzae (strain ATCC 42149 / RIB 40) (Yellow koji mold).